Here is a 117-residue protein sequence, read N- to C-terminus: Large ribosomal subunit protein bL20 (117 aa).

This sequence belongs to the bacterial ribosomal protein bL20 family.

Its function is as follows. Binds directly to 23S ribosomal RNA and is necessary for the in vitro assembly process of the 50S ribosomal subunit. It is not involved in the protein synthesizing functions of that subunit. The polypeptide is Large ribosomal subunit protein bL20 (Magnetococcus marinus (strain ATCC BAA-1437 / JCM 17883 / MC-1)).